We begin with the raw amino-acid sequence, 903 residues long: Protein translocase subunit SecA (903 aa).

ATP is bound by residues Gln87, Gly105 to Thr109, and Asp513. Basic and acidic residues predominate over residues Met840 to Arg853. The segment at Met840–Asn903 is disordered. Positions 887, 889, 898, and 899 each coordinate Zn(2+).

The protein belongs to the SecA family. Monomer and homodimer. Part of the essential Sec protein translocation apparatus which comprises SecA, SecYEG and auxiliary proteins SecDF-YajC and YidC. Zn(2+) serves as cofactor.

The protein resides in the cell inner membrane. The protein localises to the cytoplasm. The enzyme catalyses ATP + H2O + cellular proteinSide 1 = ADP + phosphate + cellular proteinSide 2.. Part of the Sec protein translocase complex. Interacts with the SecYEG preprotein conducting channel. Has a central role in coupling the hydrolysis of ATP to the transfer of proteins into and across the cell membrane, serving both as a receptor for the preprotein-SecB complex and as an ATP-driven molecular motor driving the stepwise translocation of polypeptide chains across the membrane. The sequence is that of Protein translocase subunit SecA from Vibrio cholerae serotype O1 (strain M66-2).